Here is a 351-residue protein sequence, read N- to C-terminus: Histidinol-phosphate aminotransferase (351 aa).

An N6-(pyridoxal phosphate)lysine modification is found at K213.

It belongs to the class-II pyridoxal-phosphate-dependent aminotransferase family. Histidinol-phosphate aminotransferase subfamily. As to quaternary structure, homodimer. It depends on pyridoxal 5'-phosphate as a cofactor.

The catalysed reaction is L-histidinol phosphate + 2-oxoglutarate = 3-(imidazol-4-yl)-2-oxopropyl phosphate + L-glutamate. It functions in the pathway amino-acid biosynthesis; L-histidine biosynthesis; L-histidine from 5-phospho-alpha-D-ribose 1-diphosphate: step 7/9. The protein is Histidinol-phosphate aminotransferase of Thermoanaerobacter sp. (strain X514).